A 301-amino-acid polypeptide reads, in one-letter code: Porphobilinogen deaminase (301 aa).

Cysteine 235 carries the S-(dipyrrolylmethanemethyl)cysteine modification.

The protein belongs to the HMBS family. As to quaternary structure, monomer. It depends on dipyrromethane as a cofactor.

The catalysed reaction is 4 porphobilinogen + H2O = hydroxymethylbilane + 4 NH4(+). It functions in the pathway porphyrin-containing compound metabolism; protoporphyrin-IX biosynthesis; coproporphyrinogen-III from 5-aminolevulinate: step 2/4. Its function is as follows. Tetrapolymerization of the monopyrrole PBG into the hydroxymethylbilane pre-uroporphyrinogen in several discrete steps. This chain is Porphobilinogen deaminase, found in Thermus thermophilus (strain ATCC BAA-163 / DSM 7039 / HB27).